A 456-amino-acid chain; its full sequence is Probable transcription factor At3g04930 (456 aa).

Residues 1-71 (MTSDHRDALF…LNSPSTSSLP (71 aa)) form a disordered region. 2 stretches are compositionally biased toward acidic residues: residues 15–38 (ESPDPDEGGVADGGESDTDEDLRD) and 50–62 (AEAEDDDPEEEDL). Ser-16 is modified (phosphoserine).

This sequence belongs to the GeBP family.

This chain is Probable transcription factor At3g04930, found in Arabidopsis thaliana (Mouse-ear cress).